The chain runs to 554 residues: Arginine--tRNA ligase (554 aa).

The 'HIGH' region motif lies at 129-139; it reads ANPTGPLHIGH.

The protein belongs to the class-I aminoacyl-tRNA synthetase family. Monomer.

Its subcellular location is the cytoplasm. It carries out the reaction tRNA(Arg) + L-arginine + ATP = L-arginyl-tRNA(Arg) + AMP + diphosphate. This Citrifermentans bemidjiense (strain ATCC BAA-1014 / DSM 16622 / JCM 12645 / Bem) (Geobacter bemidjiensis) protein is Arginine--tRNA ligase.